A 445-amino-acid polypeptide reads, in one-letter code: Bifunctional protein GlmU (445 aa).

Residues 1–218 (MRALVLAAGK…LLEITGVNTR (218 aa)) are pyrophosphorylase. UDP-N-acetyl-alpha-D-glucosamine-binding positions include 6–9 (LAAG), K20, Q69, 74–75 (GT), 96–98 (YGD), G134, E147, N162, and N216. D98 serves as a coordination point for Mg(2+). Residue N216 coordinates Mg(2+). A linker region spans residues 219–239 (KTLVWLEEQLRMRKIEELLEN). The N-acetyltransferase stretch occupies residues 240–445 (GVTILDPATT…GWVLKKRKEE (206 aa)). The UDP-N-acetyl-alpha-D-glucosamine site is built by R321 and K339. Residue H351 is the Proton acceptor of the active site. Positions 354 and 365 each coordinate UDP-N-acetyl-alpha-D-glucosamine. Residues A368, 374-375 (NY), S393, A411, and R428 each bind acetyl-CoA.

In the N-terminal section; belongs to the N-acetylglucosamine-1-phosphate uridyltransferase family. It in the C-terminal section; belongs to the transferase hexapeptide repeat family. Homotrimer. Requires Mg(2+) as cofactor.

Its subcellular location is the cytoplasm. The enzyme catalyses alpha-D-glucosamine 1-phosphate + acetyl-CoA = N-acetyl-alpha-D-glucosamine 1-phosphate + CoA + H(+). It catalyses the reaction N-acetyl-alpha-D-glucosamine 1-phosphate + UTP + H(+) = UDP-N-acetyl-alpha-D-glucosamine + diphosphate. It participates in nucleotide-sugar biosynthesis; UDP-N-acetyl-alpha-D-glucosamine biosynthesis; N-acetyl-alpha-D-glucosamine 1-phosphate from alpha-D-glucosamine 6-phosphate (route II): step 2/2. Its pathway is nucleotide-sugar biosynthesis; UDP-N-acetyl-alpha-D-glucosamine biosynthesis; UDP-N-acetyl-alpha-D-glucosamine from N-acetyl-alpha-D-glucosamine 1-phosphate: step 1/1. It functions in the pathway bacterial outer membrane biogenesis; LPS lipid A biosynthesis. In terms of biological role, catalyzes the last two sequential reactions in the de novo biosynthetic pathway for UDP-N-acetylglucosamine (UDP-GlcNAc). The C-terminal domain catalyzes the transfer of acetyl group from acetyl coenzyme A to glucosamine-1-phosphate (GlcN-1-P) to produce N-acetylglucosamine-1-phosphate (GlcNAc-1-P), which is converted into UDP-GlcNAc by the transfer of uridine 5-monophosphate (from uridine 5-triphosphate), a reaction catalyzed by the N-terminal domain. The chain is Bifunctional protein GlmU from Thermotoga petrophila (strain ATCC BAA-488 / DSM 13995 / JCM 10881 / RKU-1).